Reading from the N-terminus, the 298-residue chain is Anamorsin homolog (298 aa).

The interval 1-143 (MTQLIITHQS…IKAEKPSWKP (143 aa)) is N-terminal SAM-like domain. Positions 143–162 (PEEGKVLVDDIDLEGSVPDI) are linker. Positions 175, 182, 185, and 187 each coordinate [2Fe-2S] cluster. The segment at 175–187 (CKSKERACNNCNC) is fe-S binding site A. Residues Cys-218, Cys-221, Cys-229, and Cys-232 each contribute to the [4Fe-4S] cluster site. Short sequence motifs (cx2C motif) lie at residues 218-221 (CGNC) and 229-232 (CSGC). Positions 218 to 232 (CGNCYLGDAFRCSGC) are fe-S binding site B.

The protein belongs to the anamorsin family. In terms of assembly, monomer. It depends on [2Fe-2S] cluster as a cofactor. [4Fe-4S] cluster serves as cofactor.

It is found in the cytoplasm. It localises to the mitochondrion intermembrane space. Component of the cytosolic iron-sulfur (Fe-S) protein assembly (CIA) machinery. Required for the maturation of extramitochondrial Fe-S proteins. Part of an electron transfer chain functioning in an early step of cytosolic Fe-S biogenesis, facilitating the de novo assembly of a [4Fe-4S] cluster on the cytosolic Fe-S scaffold complex. Electrons are transferred from NADPH via a FAD- and FMN-containing diflavin oxidoreductase. Together with the diflavin oxidoreductase, also required for the assembly of the diferric tyrosyl radical cofactor of ribonucleotide reductase (RNR), probably by providing electrons for reduction during radical cofactor maturation in the catalytic small subunit. This Cryptosporidium parvum (strain Iowa II) protein is Anamorsin homolog.